Reading from the N-terminus, the 350-residue chain is MKKIKVLCVDDSALVRGLMTEIINSHPDMEVVATAPDPLVARELIKKHNPDVLTLDVEMPRMDGLDFLEKLMRLRPMPVVMVSSLTERGGEITLRALELGAIDFVTKPKLGIRDGLIEYSEVIADKIRAASRARLRAPAPAGHAAPLRLRSPFASSEKLVIVGASTGGTEAIREVLQPLPADSPAILITQHMPAGFTRSFAQRLDALCAVTVREASDGERVLPGHVYLAPGGETHMRLGRSGANYVIGLQASEPVNRHRPSVDVLFHSAAEAAGGNAIGVILTGMGKDGAAGLLAMKRAGARTMAQDEASCVVFGMPREAIALGAADEVMPLADISERILTRLGDRGHRV.

The 118-residue stretch at 5-122 (KVLCVDDSAL…RDGLIEYSEV (118 aa)) folds into the Response regulatory domain. Asp56 bears the 4-aspartylphosphate mark. Positions 152-346 (PFASSEKLVI…ERILTRLGDR (195 aa)) constitute a CheB-type methylesterase domain. Residues Ser165, His191, and Asp288 contribute to the active site.

It belongs to the CheB family. Phosphorylated by CheA. Phosphorylation of the N-terminal regulatory domain activates the methylesterase activity.

Its subcellular location is the cytoplasm. The catalysed reaction is [protein]-L-glutamate 5-O-methyl ester + H2O = L-glutamyl-[protein] + methanol + H(+). It catalyses the reaction L-glutaminyl-[protein] + H2O = L-glutamyl-[protein] + NH4(+). Its function is as follows. Involved in chemotaxis. Part of a chemotaxis signal transduction system that modulates chemotaxis in response to various stimuli. Catalyzes the demethylation of specific methylglutamate residues introduced into the chemoreceptors (methyl-accepting chemotaxis proteins or MCP) by CheR. Also mediates the irreversible deamidation of specific glutamine residues to glutamic acid. This chain is Protein-glutamate methylesterase/protein-glutamine glutaminase, found in Bordetella parapertussis (strain 12822 / ATCC BAA-587 / NCTC 13253).